The following is a 279-amino-acid chain: 5'-nucleotidase SurE (279 aa).

A divalent metal cation-binding residues include aspartate 28, aspartate 29, serine 59, and asparagine 113.

It belongs to the SurE nucleotidase family. It depends on a divalent metal cation as a cofactor.

It is found in the cytoplasm. It catalyses the reaction a ribonucleoside 5'-phosphate + H2O = a ribonucleoside + phosphate. Functionally, nucleotidase that shows phosphatase activity on nucleoside 5'-monophosphates. The sequence is that of 5'-nucleotidase SurE from Methanospirillum hungatei JF-1 (strain ATCC 27890 / DSM 864 / NBRC 100397 / JF-1).